The primary structure comprises 341 residues: UDP-3-O-acylglucosamine N-acyltransferase 2 (341 aa).

Histidine 254 serves as the catalytic Proton acceptor.

Belongs to the transferase hexapeptide repeat family. LpxD subfamily. In terms of assembly, homotrimer.

It catalyses the reaction a UDP-3-O-[(3R)-3-hydroxyacyl]-alpha-D-glucosamine + a (3R)-hydroxyacyl-[ACP] = a UDP-2-N,3-O-bis[(3R)-3-hydroxyacyl]-alpha-D-glucosamine + holo-[ACP] + H(+). It participates in bacterial outer membrane biogenesis; LPS lipid A biosynthesis. In terms of biological role, catalyzes the N-acylation of UDP-3-O-acylglucosamine using 3-hydroxyacyl-ACP as the acyl donor. Is involved in the biosynthesis of lipid A, a phosphorylated glycolipid that anchors the lipopolysaccharide to the outer membrane of the cell. The sequence is that of UDP-3-O-acylglucosamine N-acyltransferase 2 from Nitrobacter winogradskyi (strain ATCC 25391 / DSM 10237 / CIP 104748 / NCIMB 11846 / Nb-255).